The sequence spans 390 residues: MNVKGTPTRTIWPAREGGAVWIIDQTRLPHEFVTQRLNDLGAVAHAIRAMLVRGAPLIGATAAYGVALGMAEDPSDEGLTRACQTLLATRPTAVNLRWAIEAMAESLAAVPPDQRAQAAWAKAGAICDEDVALNEAIGDHGLGIIKDLARTKGVEKGGEGPINILTHCNAGWLATVDWGTALAPLYKAHDAGLPIHVWVDETRPRNQGASLTAWELNSHGVPHTVIADNTGGHLMQHGLVDMVIVGTDRTTATGDVCNKIGTYLKALAAFDNAVPFYVALPGPTIDWTVNDGLREIPIEQRDAAEVTRVWGRTAAGALEWVTITPTGSPAANYAFDVTPARLITGLITERGVCAASAAGLAGLYPERAPAPVPAGSAAGKGAAATADGAL.

Substrate is bound by residues 53-55 (RGA), Arg90, and Gln207. Catalysis depends on Asp248, which acts as the Proton donor. 258-259 (NK) provides a ligand contact to substrate.

This sequence belongs to the EIF-2B alpha/beta/delta subunits family. MtnA subfamily.

The enzyme catalyses 5-(methylsulfanyl)-alpha-D-ribose 1-phosphate = 5-(methylsulfanyl)-D-ribulose 1-phosphate. It catalyses the reaction 5-deoxy-alpha-D-ribose 1-phosphate = 5-deoxy-D-ribulose 1-phosphate. Its pathway is amino-acid biosynthesis; L-methionine biosynthesis via salvage pathway; L-methionine from S-methyl-5-thio-alpha-D-ribose 1-phosphate: step 1/6. Catalyzes the interconversion of methylthioribose-1-phosphate (MTR-1-P) into methylthioribulose-1-phosphate (MTRu-1-P). Also catalyzes the interconversion of 5-deoxyribose 1-phosphate and 5-deoxyribulose 1-phosphate. Part of a bifunctional DHAP-shunt salvage pathway for SAM by-products. This chain is Methylthioribose-1-phosphate isomerase, found in Rhodospirillum rubrum (strain ATCC 11170 / ATH 1.1.1 / DSM 467 / LMG 4362 / NCIMB 8255 / S1).